The following is a 226-amino-acid chain: Ribose-5-phosphate isomerase A (226 aa).

Substrate contacts are provided by residues 32–35 (TGST), 85–88 (DGAD), and 98–101 (KGGG). The active-site Proton acceptor is the E107. A substrate-binding site is contributed by K125.

Belongs to the ribose 5-phosphate isomerase family. As to quaternary structure, homodimer.

The enzyme catalyses aldehydo-D-ribose 5-phosphate = D-ribulose 5-phosphate. It participates in carbohydrate degradation; pentose phosphate pathway; D-ribose 5-phosphate from D-ribulose 5-phosphate (non-oxidative stage): step 1/1. Catalyzes the reversible conversion of ribose-5-phosphate to ribulose 5-phosphate. This is Ribose-5-phosphate isomerase A from Saccharophagus degradans (strain 2-40 / ATCC 43961 / DSM 17024).